The primary structure comprises 264 residues: Thymidylate synthase (264 aa).

Residue R21 coordinates dUMP. H51 serves as a coordination point for (6R)-5,10-methylene-5,6,7,8-tetrahydrofolate. 126-127 (RR) provides a ligand contact to dUMP. C146 (nucleophile) is an active-site residue. DUMP contacts are provided by residues 166 to 169 (RSCD), N177, and 207 to 209 (HLY). Residue D169 coordinates (6R)-5,10-methylene-5,6,7,8-tetrahydrofolate. S263 contacts (6R)-5,10-methylene-5,6,7,8-tetrahydrofolate.

Belongs to the thymidylate synthase family. Bacterial-type ThyA subfamily. Homodimer.

The protein resides in the cytoplasm. It catalyses the reaction dUMP + (6R)-5,10-methylene-5,6,7,8-tetrahydrofolate = 7,8-dihydrofolate + dTMP. It participates in pyrimidine metabolism; dTTP biosynthesis. Functionally, catalyzes the reductive methylation of 2'-deoxyuridine-5'-monophosphate (dUMP) to 2'-deoxythymidine-5'-monophosphate (dTMP) while utilizing 5,10-methylenetetrahydrofolate (mTHF) as the methyl donor and reductant in the reaction, yielding dihydrofolate (DHF) as a by-product. This enzymatic reaction provides an intracellular de novo source of dTMP, an essential precursor for DNA biosynthesis. The polypeptide is Thymidylate synthase (Buchnera aphidicola subsp. Acyrthosiphon pisum (strain Tuc7)).